We begin with the raw amino-acid sequence, 430 residues long: Serine--tRNA ligase (430 aa).

T237–E239 serves as a coordination point for L-serine. R268–E270 contacts ATP. An L-serine-binding site is contributed by E291. E355–S358 provides a ligand contact to ATP. S391 contributes to the L-serine binding site.

The protein belongs to the class-II aminoacyl-tRNA synthetase family. Type-1 seryl-tRNA synthetase subfamily. In terms of assembly, homodimer. The tRNA molecule binds across the dimer.

It localises to the cytoplasm. It carries out the reaction tRNA(Ser) + L-serine + ATP = L-seryl-tRNA(Ser) + AMP + diphosphate + H(+). It catalyses the reaction tRNA(Sec) + L-serine + ATP = L-seryl-tRNA(Sec) + AMP + diphosphate + H(+). The protein operates within aminoacyl-tRNA biosynthesis; selenocysteinyl-tRNA(Sec) biosynthesis; L-seryl-tRNA(Sec) from L-serine and tRNA(Sec): step 1/1. Functionally, catalyzes the attachment of serine to tRNA(Ser). Is also able to aminoacylate tRNA(Sec) with serine, to form the misacylated tRNA L-seryl-tRNA(Sec), which will be further converted into selenocysteinyl-tRNA(Sec). This Salmonella paratyphi C (strain RKS4594) protein is Serine--tRNA ligase.